We begin with the raw amino-acid sequence, 249 residues long: Metal-staphylopine import system ATP-binding protein CntF (249 aa).

Residues 2 to 244 (IKIKDVEKSY…DNAYTRELIE (243 aa)) form the ABC transporter domain. ATP is bound at residue 42-49 (GESGSGKS).

It belongs to the ABC transporter superfamily. As to quaternary structure, the complex is composed of two ATP-binding proteins (CntD and CntF), two transmembrane proteins (CntB and CntC) and a solute-binding protein (CntA).

The protein localises to the cell membrane. With respect to regulation, nickel/cobalt import is reduced in the presence of zinc. Part of the ABC transporter complex CntABCDF (Opp1) involved in the uptake of metal in complex with the metallophore staphylopine (StP). Involved in the import of divalent metals ions such as nickel, cobalt and zinc. Probably responsible for energy coupling to the transport system. Plays a major role in nickel/cobalt import in zinc-depleted conditions. Contributes to virulence. Required for full urease activity in vitro. The protein is Metal-staphylopine import system ATP-binding protein CntF of Staphylococcus aureus (strain NCTC 8325 / PS 47).